A 526-amino-acid chain; its full sequence is MSLTMADGVEAAAGRSKRQNSLLRKQLALAVRSVQWSYAIFWSSSLTQPGVLEWGEGCYNGDMKKRKKSYESHYKYGLQKSKELRKLYLSMLEGDSGTTVSTTHDNLNDDDDNCHSTSMMLSPDDLSDEEWYYLVSMSYVFSPSQCLPGRASATGETIWLCNAQYAENKLFSRSLLARSASIQTVVCFPYLGGVIELGVTELISEDHNLLRNIKSCLMEISAHQDNDDEKKMEIKISEEKHQLPLGISDEDLHYKRTISTVLNYSADRSGKNDKNIRHRQPNIVTSEPGSSFLRWKQCEQQVSGFVQKKKSQNVLRKILHDVPLMHTKRMFPSQNSGLNQDDPSDRRKENEKFSVLRTMVPTVNEVDKESILNNTIKYLQELEARVEELESCMGSVNFVERQRKTTENLNDSVLIEETSGNYDDSTKIDDNSGETEQVTVFRDKTHLRVKLKETEVVIEVRCSYRDYIVADIMETLSNLHMDAFSVRSHTLNKFLTLNLKAKFRGAAVASVGMIKRELRRVIGDLF.

A disordered region spans residues 330 to 351 (MFPSQNSGLNQDDPSDRRKENE). A compositionally biased stretch (polar residues) spans 332 to 341 (PSQNSGLNQD). Residues 333-382 (SQNSGLNQDDPSDRRKENEKFSVLRTMVPTVNEVDKESILNNTIKYLQEL) form the bHLH domain.

In terms of assembly, homodimer. Interacts with MYB75/PAP1, MYB90/PAP2, MYB4, MYB5, MYB6, MYB23, MYB82, MYB113, MYB114, TT2, MYB0/GL1, and MYB66/WER. In terms of tissue distribution, mostly expressed in developing seeds. Also detected in stems and leaves.

It localises to the nucleus. Functionally, trancsription activator, when associated with MYB75/PAP1 or MYB90/PAP2. The sequence is that of Transcription factor MYC1 (BHLH12) from Arabidopsis thaliana (Mouse-ear cress).